Consider the following 489-residue polypeptide: Betaine aldehyde dehydrogenase (489 aa).

Positions 26 and 93 each coordinate K(+). Residue 150 to 152 (GAW) participates in NAD(+) binding. K162 acts as the Charge relay system in catalysis. NAD(+) is bound at residue 176 to 179 (KPSE). Residue V180 coordinates K(+). 229 to 232 (GVET) contacts NAD(+). L245 contributes to the K(+) binding site. E251 serves as the catalytic Proton acceptor. NAD(+) contacts are provided by G253, C285, and E386. C285 acts as the Nucleophile in catalysis. C285 carries the cysteine sulfenic acid (-SOH) modification. K456 and G459 together coordinate K(+). E463 serves as the catalytic Charge relay system.

It belongs to the aldehyde dehydrogenase family. In terms of assembly, dimer of dimers. K(+) is required as a cofactor.

The enzyme catalyses betaine aldehyde + NAD(+) + H2O = glycine betaine + NADH + 2 H(+). It participates in amine and polyamine biosynthesis; betaine biosynthesis via choline pathway; betaine from betaine aldehyde: step 1/1. Its function is as follows. Involved in the biosynthesis of the osmoprotectant glycine betaine. Catalyzes the irreversible oxidation of betaine aldehyde to the corresponding acid. This chain is Betaine aldehyde dehydrogenase, found in Paraburkholderia phymatum (strain DSM 17167 / CIP 108236 / LMG 21445 / STM815) (Burkholderia phymatum).